A 92-amino-acid chain; its full sequence is Large ribosomal subunit protein bL25 (92 aa).

Belongs to the bacterial ribosomal protein bL25 family. Part of the 50S ribosomal subunit; part of the 5S rRNA/L5/L18/L25 subcomplex. Contacts the 5S rRNA. Binds to the 5S rRNA independently of L5 and L18.

In terms of biological role, this is one of the proteins that binds to the 5S RNA in the ribosome where it forms part of the central protuberance. The chain is Large ribosomal subunit protein bL25 from Vibrio cholerae serotype O1 (strain ATCC 39541 / Classical Ogawa 395 / O395).